Here is a 729-residue protein sequence, read N- to C-terminus: Monosaccharide-sensing protein 3 (729 aa).

The next 6 helical transmembrane spans lie at 5–25 (VLVA…NATI), 46–66 (GLIV…SGPV), 81–101 (VLYF…VLLF), 104–124 (LLDG…ISET), 135–155 (TFPQ…VFGM), and 165–185 (LMLG…AFFL). The tract at residues 337-372 (QESQWDPERNNEDSSDQDENLNSPLLSPQTTEPDDY) is disordered. Positions 356-367 (NLNSPLLSPQTT) are enriched in polar residues. Ser446 bears the Phosphoserine mark. 6 helical membrane-spanning segments follow: residues 511 to 531 (ALMV…NGVM), 557 to 577 (ASLL…LVSM), 581 to 601 (MLST…GSLV), 610 to 630 (LIST…FGAI), 650 to 670 (ICAL…PVML), and 673 to 693 (IGIA…WVFV).

Belongs to the major facilitator superfamily. Sugar transporter (TC 2.A.1.1) family. In terms of tissue distribution, weakly expressed.

Its subcellular location is the vacuole membrane. The enzyme catalyses D-glucose(out) + H(+)(in) = D-glucose(in) + H(+)(out). The catalysed reaction is sucrose(out) + H(+)(in) = sucrose(in) + H(+)(out). In terms of biological role, sugar proton-coupled antiporter which contributes to vacuolar sugar import (e.g. monosaccharides including glucose,sucrose and fructose), particularly during stress responses (e.g. in response to cold). This Arabidopsis thaliana (Mouse-ear cress) protein is Monosaccharide-sensing protein 3.